We begin with the raw amino-acid sequence, 351 residues long: MAKKLLVMAGGTGGHVFPAIAVARELQKQGWEIRWLGTKDRMEADLVPKHGIPIEFIQISGLKGKGIGALLKAPFAIFKAVMQARKIIKNYQPDAVLGMGGYVSGPGGIAAKLCGVPVILHEQNAVAGLTNVWLSKIARRVLQAFPTAFPNAEVVGNPVREDLAQLEAPEIRFAERGYPINILVMGGSQGARVINQTVPEVAKQLGNNVFISHQVGKGNLGGVEEIYQATGNGIAAEFIDDMAQAYSWADLVICRSGALTVCEIAAAGLPAIFVPYQHKDRQQYLNATYLADGGAAIIIEQQDFTPQTLLNVLQPLIADRRKLTEMAVKARAKATPTAAQRVAEVIIEQAK.

UDP-N-acetyl-alpha-D-glucosamine contacts are provided by residues 12–14 (TGG), Asn124, Arg160, Ser188, Ile239, 258–263 (ALTVCE), and Gln283.

Belongs to the glycosyltransferase 28 family. MurG subfamily.

The protein localises to the cell inner membrane. It catalyses the reaction di-trans,octa-cis-undecaprenyl diphospho-N-acetyl-alpha-D-muramoyl-L-alanyl-D-glutamyl-meso-2,6-diaminopimeloyl-D-alanyl-D-alanine + UDP-N-acetyl-alpha-D-glucosamine = di-trans,octa-cis-undecaprenyl diphospho-[N-acetyl-alpha-D-glucosaminyl-(1-&gt;4)]-N-acetyl-alpha-D-muramoyl-L-alanyl-D-glutamyl-meso-2,6-diaminopimeloyl-D-alanyl-D-alanine + UDP + H(+). It functions in the pathway cell wall biogenesis; peptidoglycan biosynthesis. In terms of biological role, cell wall formation. Catalyzes the transfer of a GlcNAc subunit on undecaprenyl-pyrophosphoryl-MurNAc-pentapeptide (lipid intermediate I) to form undecaprenyl-pyrophosphoryl-MurNAc-(pentapeptide)GlcNAc (lipid intermediate II). This Actinobacillus pleuropneumoniae serotype 5b (strain L20) protein is UDP-N-acetylglucosamine--N-acetylmuramyl-(pentapeptide) pyrophosphoryl-undecaprenol N-acetylglucosamine transferase.